A 137-amino-acid polypeptide reads, in one-letter code: Large ribosomal subunit protein uL16 (137 aa).

This sequence belongs to the universal ribosomal protein uL16 family. As to quaternary structure, part of the 50S ribosomal subunit.

Functionally, binds 23S rRNA and is also seen to make contacts with the A and possibly P site tRNAs. This is Large ribosomal subunit protein uL16 from Acinetobacter baylyi (strain ATCC 33305 / BD413 / ADP1).